The primary structure comprises 74 residues: RNA-binding protein Hfq (74 aa).

Positions 9-69 (DQFLNQLRKE…ISTFAPQKNV (61 aa)) constitute a Sm domain.

Belongs to the Hfq family. In terms of assembly, homohexamer.

RNA chaperone that binds small regulatory RNA (sRNAs) and mRNAs to facilitate mRNA translational regulation in response to envelope stress, environmental stress and changes in metabolite concentrations. Also binds with high specificity to tRNAs. The sequence is that of RNA-binding protein Hfq from Anoxybacillus flavithermus (strain DSM 21510 / WK1).